The sequence spans 216 residues: UPF0598 protein C8orf82 (216 aa).

The protein belongs to the UPF0598 family.

The chain is UPF0598 protein C8orf82 (C8orf82) from Homo sapiens (Human).